A 602-amino-acid chain; its full sequence is Sodium- and chloride-dependent GABA transporter 2 (602 aa).

The Cytoplasmic portion of the chain corresponds to 1–40 (MENRASGTTSNGETKPVCPAMEKVEEDGTLEREHWNNKME). Helical transmembrane passes span 41 to 61 (FVLSVAGEIIGLGNVWRFPYL), 68 to 88 (GAFFIPYLIFLFTCGIPVFFL), and 121 to 141 (IVSLLNVYYIVVLAWALFYLF). Residues 142–206 (SSFTTDLPWG…GIQHLGSLRW (65 aa)) are Extracellular-facing. A disulfide bridge connects residues C153 and C162. N169, N173, and N178 each carry an N-linked (GlcNAc...) asparagine glycan. 2 helical membrane-spanning segments follow: residues 207-227 (ELVLCLLLAWIICYFCIWKGV) and 233-253 (VVYFTATFPYLMLVVLLIRGV). A glycan (N-linked (GlcNAc...) asparagine) is linked at N269. 7 helical membrane passes run 282-302 (AGTQIFFSFAICLGCLTALGS), 319-339 (ILNSSTSFMAGFAIFSILGFM), 366-386 (VVMLPFSPLWACCFFFMVVLL), 418-438 (VLILIVSVISFFIGLIMLTEG), 453-473 (GMCLLFVAIFESLCVAWVYGA), 490-510 (PLIKYCWLFFTPAVCLATFLF), and 528-548 (WWGDALGWLLALSSMICIPAW). At 549–602 (SIYKLRTLKGPLRERLRQLVCPAEDLPQKNQPEPTAPATPMTSLLRLTELESNC) the chain is on the cytoplasmic side. Phosphothreonine is present on T587. A Phosphoserine modification is found at S591.

Belongs to the sodium:neurotransmitter symporter (SNF) (TC 2.A.22) family. SLC6A13 subfamily. As to expression, expressed at high levels in liver, followed by kidney and leptomeninges, and very low levels in the cerebellum (at protein level). In the brain, detected in some blood vessels (at protein level). In the kidney, expressed in the cortex, including parts of the proximal tubules, but not in the medulla (at protein level). In the liver, highest expression in periportal hepatocytes, with highest density at the vascular side (at protein level). Also detected at low levels in other organs, including skeletal muscle.

The protein resides in the cell membrane. Its subcellular location is the basolateral cell membrane. The catalysed reaction is 4-aminobutanoate(out) + chloride(out) + 2 Na(+)(out) = 4-aminobutanoate(in) + chloride(in) + 2 Na(+)(in). The enzyme catalyses taurine(out) + chloride(out) + 2 Na(+)(out) = taurine(in) + chloride(in) + 2 Na(+)(in). It catalyses the reaction beta-alanine(out) + chloride(out) + 2 Na(+)(out) = beta-alanine(in) + chloride(in) + 2 Na(+)(in). It carries out the reaction hypotaurine(out) + chloride(out) + 2 Na(+)(out) = hypotaurine(in) + chloride(in) + 2 Na(+)(in). Its activity is regulated as follows. Gamma-aminobutyric acid (GABA) transport is inhibited by beta-alanine, taurine, hypotaurine, beta-guanidinopropionic acid, 2,3-diaminopropionic acid, guvacine and nipecotic acid. Beta-alanine transport is inhibited by GABA. Taurine transport is inhibited by GABA, beta-alanine, SNAP-5114, nigericin, nipecotic acid and ouabain. In terms of biological role, mediates sodium- and chloride-dependent transport of gamma-aminobutyric acid (GABA). Can also mediate transport of beta-alanine, taurine and hypotaurine and is the major taurine transporter in hepatocytes. The polypeptide is Sodium- and chloride-dependent GABA transporter 2 (Slc6a13) (Mus musculus (Mouse)).